The following is a 309-amino-acid chain: Tagatose-6-phosphate kinase (309 aa).

The protein belongs to the carbohydrate kinase PfkB family. LacC subfamily.

The catalysed reaction is D-tagatofuranose 6-phosphate + ATP = D-tagatofuranose 1,6-bisphosphate + ADP + H(+). It participates in carbohydrate metabolism; D-tagatose 6-phosphate degradation; D-glyceraldehyde 3-phosphate and glycerone phosphate from D-tagatose 6-phosphate: step 1/2. The sequence is that of Tagatose-6-phosphate kinase from Streptococcus pyogenes serotype M4 (strain MGAS10750).